Reading from the N-terminus, the 192-residue chain is Transmembrane protein 276 (192 aa).

Residues 1 to 32 form the signal peptide; it reads MVSKPRTEWSTVLSHLVLAGVSLHAAVSSVQS. Transmembrane regions (helical) follow at residues 35–55, 63–83, 92–112, and 114–134; these read GAAAGFLLQTFAAIIMLAPGP, AGAWVATVIGLPLLAFDFHWV, LLLGGGMVLAVAGDHLGPEGC, and VAGQAVLLVVAVTILIVAVFT.

Its subcellular location is the membrane. The polypeptide is Transmembrane protein 276 (Mus musculus (Mouse)).